The chain runs to 219 residues: Tegument protein UL14 (219 aa).

Positions Val-159–Glu-219 are disordered. Over residues Ala-186–Ala-202 the composition is skewed to pro residues.

Belongs to the alphaherpesvirinae HHV-1 UL14 protein family. Phosphorylated.

The protein localises to the virion tegument. It localises to the host cytoplasm. It is found in the host nucleus. Its function is as follows. Contributes to the nuclear transport of the viral transcriptional activator VP16 during the early phase of infection. Therefore, participates indirectly in the regulation of the immediate-early gene expression. Additionally, seems to be important for efficient nuclear targeting of capsids. In Human herpesvirus 2 (strain HG52) (HHV-2), this protein is Tegument protein UL14.